The chain runs to 470 residues: FAD-dependent monooxygenase SAT7 (470 aa).

A helical membrane pass occupies residues 28 to 48 (GLSVAIVGGGIVGIALALGLV). FAD contacts are provided by glutamate 58, alanine 71, and arginine 143. Residues arginine 227 and tyrosine 260 contribute to the active site. Residues aspartate 351 and alanine 364 each contribute to the FAD site.

Belongs to the paxM FAD-dependent monooxygenase family. FAD is required as a cofactor.

The protein localises to the membrane. It participates in mycotoxin biosynthesis. FAD-dependent monooxygenase; part of the satratoxin SC1 cluster involved in the biosynthesis of satratoxins, trichothecene mycotoxins that are associated with human food poisonings. Satratoxins are suggested to be made by products of multiple gene clusters (SC1, SC2 and SC3) that encode 21 proteins in all, including polyketide synthases, acetyltransferases, and other enzymes expected to modify the trichothecene skeleton. SC1 encodes 10 proteins, SAT1 to SAT10. The largest are SAT8, which encodes a putative polyketide synthase (PKS) with a conventional non-reducing architecture, and SAT10, a putative protein containing four ankyrin repeats and thus may be involved in protein scaffolding. The putative short-chain reductase SAT3 may assist the PKS in some capacity. SAT6 contains a secretory lipase domain and acts probably as a trichothecene esterase. SAT5 encodes a putative acetyltransferase, and so, with SAT6, may affect endogenous protection from toxicity. The probable transcription factor SAT9 may regulate the expression of the SC1 cluster. SC2 encodes proteins SAT11 to SAT16, the largest of which encodes the putative reducing PKS SAT13. SAT11 is a cytochrome P450 monooxygenase, while SAT14 and SAT16 are probable acetyltransferases. The SC2 cluster may be regulated by the transcription factor SAT15. SC3 is a small cluster that encodes 5 proteins, SAT17 to SAT21. SAT21 is a putative MFS-type transporter which may have a role in exporting secondary metabolites. The four other proteins putatively encoded in SC3 include the taurine hydroxylase-like protein SAT17, the O-methyltransferase SAT18, the acetyltransferase SAT19, and the Cys6-type zinc finger SAT20, the latter being probably involved in regulation of SC3 expression. The polypeptide is FAD-dependent monooxygenase SAT7 (Stachybotrys chartarum (strain CBS 109288 / IBT 7711) (Toxic black mold)).